We begin with the raw amino-acid sequence, 289 residues long: Type III pantothenate kinase (289 aa).

ATP is bound at residue Asp-9–Lys-16. Substrate contacts are provided by residues Tyr-106 and Gly-113–Arg-116. The active-site Proton acceptor is Asp-115. ATP is bound at residue Thr-139. Thr-209 lines the substrate pocket.

The protein belongs to the type III pantothenate kinase family. Homodimer. NH4(+) is required as a cofactor. It depends on K(+) as a cofactor.

It is found in the cytoplasm. It carries out the reaction (R)-pantothenate + ATP = (R)-4'-phosphopantothenate + ADP + H(+). Its pathway is cofactor biosynthesis; coenzyme A biosynthesis; CoA from (R)-pantothenate: step 1/5. Its function is as follows. Catalyzes the phosphorylation of pantothenate (Pan), the first step in CoA biosynthesis. The sequence is that of Type III pantothenate kinase from Paraburkholderia phymatum (strain DSM 17167 / CIP 108236 / LMG 21445 / STM815) (Burkholderia phymatum).